The sequence spans 441 residues: Trigger factor (441 aa).

Residues 161–246 (GDKVTIDFLG…VHEVLGEKLP (86 aa)) form the PPIase FKBP-type domain.

This sequence belongs to the FKBP-type PPIase family. Tig subfamily.

Its subcellular location is the cytoplasm. The enzyme catalyses [protein]-peptidylproline (omega=180) = [protein]-peptidylproline (omega=0). Functionally, involved in protein export. Acts as a chaperone by maintaining the newly synthesized protein in an open conformation. Functions as a peptidyl-prolyl cis-trans isomerase. This is Trigger factor from Teredinibacter turnerae (strain ATCC 39867 / T7901).